Here is a 210-residue protein sequence, read N- to C-terminus: Thymidylate kinase (210 aa).

Gly10–Ser17 contacts ATP.

It belongs to the thymidylate kinase family.

The catalysed reaction is dTMP + ATP = dTDP + ADP. Functionally, phosphorylation of dTMP to form dTDP in both de novo and salvage pathways of dTTP synthesis. This chain is Thymidylate kinase, found in Hamiltonella defensa subsp. Acyrthosiphon pisum (strain 5AT).